A 423-amino-acid chain; its full sequence is Type II methyltransferase M.NlaIV (423 aa).

Positions 4 to 423 (IKFIDLFSGM…AVSERLLHTL (420 aa)) constitute an SAM-dependent MTase C5-type domain. Cys80 is an active-site residue.

The protein belongs to the class I-like SAM-binding methyltransferase superfamily. C5-methyltransferase family.

It carries out the reaction a 2'-deoxycytidine in DNA + S-adenosyl-L-methionine = a 5-methyl-2'-deoxycytidine in DNA + S-adenosyl-L-homocysteine + H(+). Its function is as follows. A methylase that recognizes the double-stranded sequence 5'-GGNNCC-3', methylates C-? on both strands, and protects the DNA from cleavage by the NlaIV endonuclease. This Neisseria lactamica protein is Type II methyltransferase M.NlaIV (nlaIVM).